The following is a 136-amino-acid chain: Small ribosomal subunit protein bS16 (136 aa).

Residues 113 to 122 are compositionally biased toward basic residues; that stretch reads LALKSHRRSA. Residues 113–136 form a disordered region; that stretch reads LALKSHRRSAKKEAEAKAATGGEA.

The protein belongs to the bacterial ribosomal protein bS16 family.

The sequence is that of Small ribosomal subunit protein bS16 from Pelodictyon phaeoclathratiforme (strain DSM 5477 / BU-1).